The following is a 183-amino-acid chain: MSQPAKVLLLYAHPESQDSVANRVLLKPATQLSNVTVHDLYAHYPDFFIDIPREQALLREHEVIVFQHPLYTYSCPALLKEWLDRVLSRGFASGPGGNQLAGKYWRNVITTGEPESAYRYDALNRYPMSDVLRPFELAAGMCRMHWLSPIIIYWARRQSAKELASHARAYGDWLANPLSPGGR.

This sequence belongs to the NAD(P)H dehydrogenase (quinone) family. KefG subfamily. As to quaternary structure, interacts with KefB.

The protein localises to the cell inner membrane. The catalysed reaction is a quinone + NADH + H(+) = a quinol + NAD(+). It catalyses the reaction a quinone + NADPH + H(+) = a quinol + NADP(+). Regulatory subunit of a potassium efflux system that confers protection against electrophiles. Required for full activity of KefB. The polypeptide is Glutathione-regulated potassium-efflux system ancillary protein KefG (Shigella flexneri serotype 5b (strain 8401)).